We begin with the raw amino-acid sequence, 249 residues long: tRNA (guanine-N(1)-)-methyltransferase (249 aa).

S-adenosyl-L-methionine is bound by residues G113 and 133 to 138 (IGDFVV).

Belongs to the RNA methyltransferase TrmD family. In terms of assembly, homodimer.

It localises to the cytoplasm. It catalyses the reaction guanosine(37) in tRNA + S-adenosyl-L-methionine = N(1)-methylguanosine(37) in tRNA + S-adenosyl-L-homocysteine + H(+). In terms of biological role, specifically methylates guanosine-37 in various tRNAs. In Neisseria meningitidis serogroup C / serotype 2a (strain ATCC 700532 / DSM 15464 / FAM18), this protein is tRNA (guanine-N(1)-)-methyltransferase.